We begin with the raw amino-acid sequence, 292 residues long: Tumor necrosis factor alpha-induced protein 8-like protein 3 (292 aa).

Positions 81–107 are disordered; the sequence is DAQPAARSMDSDSGEQSEGEPVTAAGP. A binding to phosphoinositides region spans residues 109–292; it reads VFSSKSLALQ…INKLLDEKVL (184 aa).

This sequence belongs to the TNFAIP8 family. As to expression, widely expressed (at protein level). Highly expressed in most carcinoma cell lines.

It is found in the cytoplasm. The protein localises to the cell membrane. Its function is as follows. Acts as a lipid transfer protein. Preferentially captures and shuttles two lipid second messengers, i.e., phosphatidylinositol 4,5- bisphosphate and phosphatidylinositol 3,4,5-trisphosphate and increases their levels in the plasma membrane. Additionally, may also function as a lipid-presenting protein to enhance the activity of the PI3K-AKT and MEK-ERK pathways. May act as a regulator of tumorigenesis through its activation of phospholipid signaling. This chain is Tumor necrosis factor alpha-induced protein 8-like protein 3 (TNFAIP8L3), found in Homo sapiens (Human).